A 546-amino-acid polypeptide reads, in one-letter code: G1/S-specific cyclin CLN1 (546 aa).

Residues 224–265 (SNGKEWSCKRKSQSSDDSDATVEEHISSSPQSTGLDGDTTTM) are disordered.

It belongs to the cyclin family.

Essential for the control of the cell cycle at the G1/S (start) transition. Interacts with the CDC28 protein kinase to form MPF. This chain is G1/S-specific cyclin CLN1 (CLN1), found in Saccharomyces cerevisiae (strain ATCC 204508 / S288c) (Baker's yeast).